The following is a 549-amino-acid chain: CTP synthase (549 aa).

The interval 1–267 is amidoligase domain; it reads MAKFVFITGG…CREVLDVLQL (267 aa). Ser13 contributes to the CTP binding site. Residue Ser13 coordinates UTP. ATP is bound by residues 14 to 19 and Asp71; that span reads SIGKGI. Mg(2+)-binding residues include Asp71 and Glu141. CTP-binding positions include 148 to 150, 188 to 193, and Lys224; these read DIE and KTKPTQ. UTP contacts are provided by residues 188 to 193 and Lys224; that span reads KTKPTQ. In terms of domain architecture, Glutamine amidotransferase type-1 spans 292–534; sequence KVALVGKYVQ…IEAAQQRLPD (243 aa). Gly354 serves as a coordination point for L-glutamine. Cys381 functions as the Nucleophile; for glutamine hydrolysis in the catalytic mechanism. Residues 382-385, Glu405, and Arg462 each bind L-glutamine; that span reads LGMQ. Catalysis depends on residues His507 and Glu509.

It belongs to the CTP synthase family. Homotetramer.

The catalysed reaction is UTP + L-glutamine + ATP + H2O = CTP + L-glutamate + ADP + phosphate + 2 H(+). It carries out the reaction L-glutamine + H2O = L-glutamate + NH4(+). It catalyses the reaction UTP + NH4(+) + ATP = CTP + ADP + phosphate + 2 H(+). Its pathway is pyrimidine metabolism; CTP biosynthesis via de novo pathway; CTP from UDP: step 2/2. With respect to regulation, allosterically activated by GTP, when glutamine is the substrate; GTP has no effect on the reaction when ammonia is the substrate. The allosteric effector GTP functions by stabilizing the protein conformation that binds the tetrahedral intermediate(s) formed during glutamine hydrolysis. Inhibited by the product CTP, via allosteric rather than competitive inhibition. Catalyzes the ATP-dependent amination of UTP to CTP with either L-glutamine or ammonia as the source of nitrogen. Regulates intracellular CTP levels through interactions with the four ribonucleotide triphosphates. The protein is CTP synthase of Synechococcus sp. (strain CC9902).